The chain runs to 134 residues: Small ribosomal subunit protein uS12 (134 aa).

The tract at residues 1 to 26 (MPTTQQLLRKGRTTLQKKSKVPALKG) is disordered. The span at 9–20 (RKGRTTLQKKSK) shows a compositional bias: basic residues. Asp89 is modified (3-methylthioaspartic acid). The tract at residues 103-134 (DTQGVKDRNKSRSKYGTKKPKAGAAAAGAKKK) is disordered. Residues 113-123 (SRSKYGTKKPK) are compositionally biased toward basic residues. Over residues 124–134 (AGAAAAGAKKK) the composition is skewed to low complexity.

It belongs to the universal ribosomal protein uS12 family. In terms of assembly, part of the 30S ribosomal subunit. Contacts proteins S8 and S17. May interact with IF1 in the 30S initiation complex.

With S4 and S5 plays an important role in translational accuracy. Functionally, interacts with and stabilizes bases of the 16S rRNA that are involved in tRNA selection in the A site and with the mRNA backbone. Located at the interface of the 30S and 50S subunits, it traverses the body of the 30S subunit contacting proteins on the other side and probably holding the rRNA structure together. The combined cluster of proteins S8, S12 and S17 appears to hold together the shoulder and platform of the 30S subunit. This Deinococcus geothermalis (strain DSM 11300 / CIP 105573 / AG-3a) protein is Small ribosomal subunit protein uS12.